The sequence spans 130 residues: Holo-[acyl-carrier-protein] synthase (130 aa).

Mg(2+) contacts are provided by Asp-9 and Glu-58.

Belongs to the P-Pant transferase superfamily. AcpS family. Mg(2+) is required as a cofactor.

The protein localises to the cytoplasm. The catalysed reaction is apo-[ACP] + CoA = holo-[ACP] + adenosine 3',5'-bisphosphate + H(+). In terms of biological role, transfers the 4'-phosphopantetheine moiety from coenzyme A to a Ser of acyl-carrier-protein. The chain is Holo-[acyl-carrier-protein] synthase from Mycolicibacterium smegmatis (strain ATCC 700084 / mc(2)155) (Mycobacterium smegmatis).